A 369-amino-acid polypeptide reads, in one-letter code: Anhydro-N-acetylmuramic acid kinase (369 aa).

12 to 19 (GTSMDGID) lines the ATP pocket.

It belongs to the anhydro-N-acetylmuramic acid kinase family.

The enzyme catalyses 1,6-anhydro-N-acetyl-beta-muramate + ATP + H2O = N-acetyl-D-muramate 6-phosphate + ADP + H(+). It functions in the pathway amino-sugar metabolism; 1,6-anhydro-N-acetylmuramate degradation. Its pathway is cell wall biogenesis; peptidoglycan recycling. Functionally, catalyzes the specific phosphorylation of 1,6-anhydro-N-acetylmuramic acid (anhMurNAc) with the simultaneous cleavage of the 1,6-anhydro ring, generating MurNAc-6-P. Is required for the utilization of anhMurNAc either imported from the medium or derived from its own cell wall murein, and thus plays a role in cell wall recycling. This chain is Anhydro-N-acetylmuramic acid kinase, found in Shewanella sediminis (strain HAW-EB3).